We begin with the raw amino-acid sequence, 356 residues long: MYHLLLRVMFRLPPERIHHLAFAAMRLVTRFSPLRQLVGRVLVVDDPVLRNTVFGLDFPAPLGLAAGFDKDATGVDAWGPLGFGFAEVGTVTAQAQPGNPAPRLFRLPADRALINRMGFNNHGAGNAANHLRQRRAGVPIGANIGKTKIVDAADAPADYTASAHLLGPLADFMVVNVSSPNTPGLRDLQAVESLRPLLRAVLDSVTVPVLVKIAPDLSDDDVDAVADLALELGLAGIVATNTTIRRDGLNTPDDEVTAIGAGGLSGPPVAERSLEVLRRLHARVGDRLVLISVGGIETVDQAWERILAGASLVQGYTGFIYGGPFWARRIHKGLARKVREAGYSSVADAVGAGAVR.

FMN contacts are provided by residues 66–70 (AGFDK) and Thr-90. Lys-70 is a binding site for substrate. A substrate-binding site is contributed by 115 to 119 (NRMGF). 2 residues coordinate FMN: Asn-143 and Asn-176. Asn-176 is a substrate binding site. The active-site Nucleophile is the Ser-179. Asn-181 contributes to the substrate binding site. The FMN site is built by Lys-212 and Thr-240. Position 241–242 (241–242 (NT)) interacts with substrate. FMN-binding positions include Gly-266, Gly-295, and 316–317 (YT).

Belongs to the dihydroorotate dehydrogenase family. Type 2 subfamily. As to quaternary structure, monomer. FMN serves as cofactor.

It is found in the cell membrane. It catalyses the reaction (S)-dihydroorotate + a quinone = orotate + a quinol. It functions in the pathway pyrimidine metabolism; UMP biosynthesis via de novo pathway; orotate from (S)-dihydroorotate (quinone route): step 1/1. In terms of biological role, catalyzes the conversion of dihydroorotate to orotate with quinone as electron acceptor. This chain is Dihydroorotate dehydrogenase (quinone), found in Rhodococcus opacus (strain B4).